The following is a 226-amino-acid chain: PKHD-type hydroxylase PSPA7_5129 (226 aa).

The region spanning 78-178 is the Fe2OG dioxygenase domain; the sequence is KVFPPLFNCY…RYASFFWTQS (101 aa). Residues His96, Asp98, and His159 each contribute to the Fe cation site. Arg169 lines the 2-oxoglutarate pocket.

Fe(2+) is required as a cofactor. It depends on L-ascorbate as a cofactor.

This chain is PKHD-type hydroxylase PSPA7_5129, found in Pseudomonas paraeruginosa (strain DSM 24068 / PA7) (Pseudomonas aeruginosa (strain PA7)).